A 423-amino-acid polypeptide reads, in one-letter code: Putative serpin-Z12 (423 aa).

A disordered region spans residues 1–25; that stretch reads MAALAAGEPFSGRATGGDGGVRSDV. The interval 370-394 is RCL; the sequence is GTVAAASTAVVMMQKGSSLPPVDFV.

Belongs to the serpin family.

Its function is as follows. Probable serine protease inhibitor. This Oryza sativa subsp. japonica (Rice) protein is Putative serpin-Z12.